A 212-amino-acid chain; its full sequence is Pyrrolidone-carboxylate peptidase (212 aa).

Active-site residues include Glu78, Cys141, and His165.

Belongs to the peptidase C15 family. As to quaternary structure, homotetramer.

The protein localises to the cytoplasm. It catalyses the reaction Release of an N-terminal pyroglutamyl group from a polypeptide, the second amino acid generally not being Pro.. Removes 5-oxoproline from various penultimate amino acid residues except L-proline. This is Pyrrolidone-carboxylate peptidase from Staphylococcus aureus (strain NCTC 8325 / PS 47).